The following is a 280-amino-acid chain: Ribosomal RNA small subunit methyltransferase A (280 aa).

Positions 28, 30, 55, 77, 103, and 122 each coordinate S-adenosyl-L-methionine.

The protein belongs to the class I-like SAM-binding methyltransferase superfamily. rRNA adenine N(6)-methyltransferase family. RsmA subfamily.

The protein localises to the cytoplasm. It catalyses the reaction adenosine(1518)/adenosine(1519) in 16S rRNA + 4 S-adenosyl-L-methionine = N(6)-dimethyladenosine(1518)/N(6)-dimethyladenosine(1519) in 16S rRNA + 4 S-adenosyl-L-homocysteine + 4 H(+). In terms of biological role, specifically dimethylates two adjacent adenosines (A1518 and A1519) in the loop of a conserved hairpin near the 3'-end of 16S rRNA in the 30S particle. May play a critical role in biogenesis of 30S subunits. The polypeptide is Ribosomal RNA small subunit methyltransferase A (Ruegeria sp. (strain TM1040) (Silicibacter sp.)).